A 140-amino-acid polypeptide reads, in one-letter code: Putative nickel-responsive regulator (140 aa).

Ni(2+) contacts are provided by histidine 81, histidine 92, histidine 94, and cysteine 100.

Belongs to the transcriptional regulatory CopG/NikR family. Requires Ni(2+) as cofactor.

Its function is as follows. Transcriptional regulator. The chain is Putative nickel-responsive regulator from Methanothrix thermoacetophila (strain DSM 6194 / JCM 14653 / NBRC 101360 / PT) (Methanosaeta thermophila).